Consider the following 447-residue polypeptide: Na(+)-translocating NADH-quinone reductase subunit A (447 aa).

It belongs to the NqrA family. Composed of six subunits; NqrA, NqrB, NqrC, NqrD, NqrE and NqrF.

The enzyme catalyses a ubiquinone + n Na(+)(in) + NADH + H(+) = a ubiquinol + n Na(+)(out) + NAD(+). Its function is as follows. NQR complex catalyzes the reduction of ubiquinone-1 to ubiquinol by two successive reactions, coupled with the transport of Na(+) ions from the cytoplasm to the periplasm. NqrA to NqrE are probably involved in the second step, the conversion of ubisemiquinone to ubiquinol. The chain is Na(+)-translocating NADH-quinone reductase subunit A from Tolumonas auensis (strain DSM 9187 / NBRC 110442 / TA 4).